We begin with the raw amino-acid sequence, 601 residues long: Glutathione-regulated potassium-efflux system protein KefB (601 aa).

13 helical membrane-spanning segments follow: residues 4–24 (ADLL…VPLA), 29–49 (IGAV…GLGF), 55–75 (EILH…GLEL), 87–107 (IFGV…GLLM), 111–131 (FLWQ…TAMA), 152–172 (VLLF…LLAG), 177–197 (HFDW…LIGG), 207–227 (FIAA…LVLS), 230–250 (LFMD…GVLL), 262–282 (AIDP…GMSL), 284–304 (LGVL…LVVI), 324–344 (MQFA…FSTA), and 356–376 (ALLL…MKGI). The 120-residue stretch at 400-519 (KPQVIVVGFG…AGVTQFSRET (120 aa)) folds into the RCK N-terminal domain.

Belongs to the monovalent cation:proton antiporter 2 (CPA2) transporter (TC 2.A.37) family. KefB subfamily. In terms of assembly, interacts with the regulatory subunit KefG.

It localises to the cell inner membrane. Pore-forming subunit of a potassium efflux system that confers protection against electrophiles. Catalyzes K(+)/H(+) antiport. This is Glutathione-regulated potassium-efflux system protein KefB from Salmonella heidelberg (strain SL476).